A 64-amino-acid chain; its full sequence is PYLa/PGLa B (64 aa).

A signal peptide spans 1–20 (MYKQIFLCLIIAALCATIMA). Positions 21–35 (EASALADADDDDDKR) are excised as a propeptide. A Leucine amide modification is found at Leu-59. Positions 60-64 (GRRDS) are excised as a propeptide.

It belongs to the gastrin/cholecystokinin family. Magainin subfamily. In terms of tissue distribution, expressed by the skin glands. Synthesized in the stomach and stored in a novel granular multinucleated cell in the gastric mucosa. Stored as active, processed peptides in large granules within the granular gland secretions of the skin.

Its subcellular location is the secreted. Functionally, PGLa and PGLa-H display a broad-spectrum of antibacterial activity against a range of Gram-positive and Gram-negative bacteria. PGLa also displays antifungal activity against C.albicans ATCC 14053. PGLa-H shows moderate antibacterial activity against the multidrug-resistant methicillin-resistant S.aureus (MRSA) but exhibits very little hemolytic activity. The chain is PYLa/PGLa B (pgla-b) from Xenopus laevis (African clawed frog).